A 608-amino-acid polypeptide reads, in one-letter code: Protein transport protein SEC9 (608 aa).

Disordered regions lie at residues 1-23 (MGFKKMFKKKDPTESEIRESMQD) and 50-307 (VTQK…QTAA). A compositionally biased stretch (basic and acidic residues) spans 9 to 21 (KKDPTESEIRESM). Composition is skewed to low complexity over residues 54–67 (SSAAPPAARSNPYA) and 74–85 (SGGNPYAAAAAG). The segment covering 100–121 (NGGGGNGGSNSNGGSNSNGGSN) has biased composition (gly residues). The span at 122–134 (GSPYKMNNGGNNA) shows a compositional bias: low complexity. A compositionally biased stretch (basic and acidic residues) spans 169–183 (SKKEEAPPPLEDPRL). Positions 198 to 215 (ERDDYEPVYDVGLPEEPE) are enriched in acidic residues. Residues 241–260 (NVDRELEEDKTALFGPRDDP) are compositionally biased toward basic and acidic residues. In terms of domain architecture, t-SNARE coiled-coil homology 1 spans 390 to 452 (RFTKQQSAAS…KIAEDKAKEL (63 aa)). The disordered stretch occupies residues 514–533 (GEKSKHRKEMMSKYGSRPGR). Residues 545–607 (DILEDEIDNN…HLNTARLAGI (63 aa)) enclose the t-SNARE coiled-coil homology 2 domain.

It belongs to the SNAP-25 family.

The polypeptide is Protein transport protein SEC9 (SEC9) (Yarrowia lipolytica (strain CLIB 122 / E 150) (Yeast)).